Consider the following 116-residue polypeptide: Large ribosomal subunit protein bL19 (116 aa).

It belongs to the bacterial ribosomal protein bL19 family.

In terms of biological role, this protein is located at the 30S-50S ribosomal subunit interface and may play a role in the structure and function of the aminoacyl-tRNA binding site. The protein is Large ribosomal subunit protein bL19 of Pseudomonas fluorescens (strain ATCC BAA-477 / NRRL B-23932 / Pf-5).